Here is a 346-residue protein sequence, read N- to C-terminus: uncharacterized protein (346 aa).

Residue His-65 participates in Zn(2+) binding. Residue Asp-67 is part of the active site. Asp-89 is a binding site for Zn(2+). Residue Glu-115 is the Proton acceptor of the active site. Zn(2+) contacts are provided by Glu-116, Glu-145, and His-319.

Belongs to the peptidase M20A family. Zn(2+) is required as a cofactor. The cofactor is Co(2+).

This is an uncharacterized protein from Methanocaldococcus jannaschii (strain ATCC 43067 / DSM 2661 / JAL-1 / JCM 10045 / NBRC 100440) (Methanococcus jannaschii).